A 1319-amino-acid chain; its full sequence is Son of sevenless homolog 1 (1319 aa).

The 191-residue stretch at 200-390 (TYYDLVKAFM…LNVQSGMEKI (191 aa)) folds into the DH domain. The PH domain occupies 444–548 (FIMEGTLTRV…AALISLQYRS (105 aa)). The 145-residue stretch at 597-741 (GIPIIKAGTV…SITKIIQRKK (145 aa)) folds into the N-terminal Ras-GEF domain. In terms of domain architecture, Ras-GEF spans 780-1019 (HPIEIARQLT…FNKSLEIEPR (240 aa)). Positions 1019–1101 (RHPKPLPRFP…ASGTSSNTDV (83 aa)) are disordered. Phosphoserine occurs at positions 1078 and 1082. Ser1120 and Ser1147 each carry phosphoserine; by RPS6KA3. The tract at residues 1121–1319 (VSSISLSKGT…PPLLENAHSS (199 aa)) is disordered. Residues Ser1164, Ser1196, and Ser1215 each carry the phosphoserine modification. The span at 1194–1203 (PESPPLLPPR) shows a compositional bias: pro residues. The segment covering 1238-1250 (SPSPFTPPPPQTP) has biased composition (pro residues). Ser1261 carries the phosphoserine modification. The segment covering 1296-1309 (YKREHTHPSMHRDG) has biased composition (basic and acidic residues).

In terms of assembly, interacts (via C-terminus) with GRB2 (via SH3 domain). Forms a complex with phosphorylated MUC1 and GRB2 (via its SH3 domains). Interacts with phosphorylated LAT2. Interacts with NCK1 and NCK2. Part of a complex consisting of ABI1, EPS8 and SOS1. Interacts (Ser-1120 and Ser-1147 phosphorylated form) with YWHAB and YWHAE. Post-translationally, phosphorylation at Ser-1120 and Ser-1147 by RPS6KA3 create YWHAB and YWHAE binding sites and which contribute to the negative regulation of EGF-induced MAPK1/3 phosphorylation. In terms of tissue distribution, expressed in most embryonic and adult tissues.

Promotes the exchange of Ras-bound GDP by GTP. Probably by promoting Ras activation, regulates phosphorylation of MAP kinase MAPK3 in response to EGF. Catalytic component of a trimeric complex that participates in transduction of signals from Ras to Rac by promoting the Rac-specific guanine nucleotide exchange factor (GEF) activity. In Mus musculus (Mouse), this protein is Son of sevenless homolog 1 (Sos1).